The primary structure comprises 501 residues: UPF0371 protein CD630_08980 (501 aa).

The protein belongs to the UPF0371 family.

In Clostridioides difficile (strain 630) (Peptoclostridium difficile), this protein is UPF0371 protein CD630_08980.